The sequence spans 233 residues: Purine nucleoside phosphorylase DeoD-type (233 aa).

Position 4 (His-4) interacts with a purine D-ribonucleoside. Residues Gly-20, Arg-24, Arg-43, and Arg-87–Thr-90 each bind phosphate. A purine D-ribonucleoside is bound by residues Glu-178–Glu-180 and Ser-202–Asp-203. Asp-203 (proton donor) is an active-site residue.

It belongs to the PNP/UDP phosphorylase family. In terms of assembly, homohexamer; trimer of homodimers.

The enzyme catalyses a purine D-ribonucleoside + phosphate = a purine nucleobase + alpha-D-ribose 1-phosphate. It carries out the reaction a purine 2'-deoxy-D-ribonucleoside + phosphate = a purine nucleobase + 2-deoxy-alpha-D-ribose 1-phosphate. Its function is as follows. Catalyzes the reversible phosphorolytic breakdown of the N-glycosidic bond in the beta-(deoxy)ribonucleoside molecules, with the formation of the corresponding free purine bases and pentose-1-phosphate. The sequence is that of Purine nucleoside phosphorylase DeoD-type from Listeria monocytogenes serotype 4b (strain CLIP80459).